We begin with the raw amino-acid sequence, 246 residues long: uncharacterized protein (246 aa).

Composition is skewed to basic residues over residues 1–10 (MVWRFQKHIG) and 79–97 (TRRRGAGQRHCNQKPKAGR). Residues 1–184 (MVWRFQKHIG…LPPAHVPPTL (184 aa)) are disordered. The segment covering 158–180 (PPFPPPPPPGDPTPPSPLPPAHV) has biased composition (pro residues).

This is an uncharacterized protein from Homo sapiens (Human).